We begin with the raw amino-acid sequence, 361 residues long: dTDP-glucose 4,6-dehydratase 1 (361 aa).

NAD(+) is bound by residues 11–12 (FI), 32–35 (DKLT), 58–59 (DI), 80–84 (LAAES), and threonine 99. Substrate is bound at residue serine 84. Residue threonine 133 participates in substrate binding. Aspartate 134 serves as the catalytic Proton donor. Catalysis depends on proton acceptor residues glutamate 135 and tyrosine 167. 167–171 (YSASK) is an NAD(+) binding site. Asparagine 196 lines the substrate pocket. Position 197 (asparagine 197) interacts with NAD(+). Substrate contacts are provided by residues 206-207 (KL), 222-224 (PIY), arginine 231, asparagine 266, and 296-300 (DRPGH).

Belongs to the NAD(P)-dependent epimerase/dehydratase family. dTDP-glucose dehydratase subfamily. Homodimer. Requires NAD(+) as cofactor.

It catalyses the reaction dTDP-alpha-D-glucose = dTDP-4-dehydro-6-deoxy-alpha-D-glucose + H2O. Its pathway is carbohydrate biosynthesis; dTDP-L-rhamnose biosynthesis. It participates in bacterial outer membrane biogenesis; LPS O-antigen biosynthesis. Catalyzes the dehydration of dTDP-D-glucose to form dTDP-6-deoxy-D-xylo-4-hexulose via a three-step process involving oxidation, dehydration and reduction. This Escherichia coli (strain K12) protein is dTDP-glucose 4,6-dehydratase 1 (rfbB).